A 242-amino-acid chain; its full sequence is Anamorsin homolog (242 aa).

The interval M1–L140 is N-terminal SAM-like domain. The interval L140–A159 is disordered. The segment at S141–N162 is linker. A compositionally biased stretch (basic and acidic residues) spans E148–A159. [4Fe-4S] cluster is bound by residues C205, C208, C216, and C219. Short sequence motifs (cx2C motif) lie at residues C205–C208 and C216–C219. The segment at C205–C219 is fe-S binding site B.

This sequence belongs to the anamorsin family. As to quaternary structure, monomer. It depends on [4Fe-4S] cluster as a cofactor.

The protein localises to the cytoplasm. Its subcellular location is the mitochondrion intermembrane space. Component of the cytosolic iron-sulfur (Fe-S) protein assembly (CIA) machinery. Required for the maturation of extramitochondrial Fe-S proteins. Part of an electron transfer chain functioning in an early step of cytosolic Fe-S biogenesis, facilitating the de novo assembly of a [4Fe-4S] cluster on the cytosolic Fe-S scaffold complex. Electrons are transferred from NADPH via a FAD- and FMN-containing diflavin oxidoreductase. Together with the diflavin oxidoreductase, also required for the assembly of the diferric tyrosyl radical cofactor of ribonucleotide reductase (RNR), probably by providing electrons for reduction during radical cofactor maturation in the catalytic small subunit. The protein is Anamorsin homolog of Plasmodium vivax (strain Salvador I).